The primary structure comprises 425 residues: Enolase (425 aa).

Gln-163 serves as a coordination point for (2R)-2-phosphoglycerate. Glu-205 acts as the Proton donor in catalysis. Residues Asp-242, Glu-285, and Asp-312 each contribute to the Mg(2+) site. Lys-337, Arg-366, Ser-367, and Lys-388 together coordinate (2R)-2-phosphoglycerate. Lys-337 (proton acceptor) is an active-site residue.

This sequence belongs to the enolase family. It depends on Mg(2+) as a cofactor.

It localises to the cytoplasm. It is found in the secreted. The protein localises to the cell surface. The catalysed reaction is (2R)-2-phosphoglycerate = phosphoenolpyruvate + H2O. It functions in the pathway carbohydrate degradation; glycolysis; pyruvate from D-glyceraldehyde 3-phosphate: step 4/5. Functionally, catalyzes the reversible conversion of 2-phosphoglycerate (2-PG) into phosphoenolpyruvate (PEP). It is essential for the degradation of carbohydrates via glycolysis. This Acidiphilium cryptum (strain JF-5) protein is Enolase.